Consider the following 121-residue polypeptide: Small ribosomal subunit protein uS13 (121 aa).

The disordered stretch occupies residues 92-121 (RKGLPVRGQRTKTNARTRKGPRKSGVQLKK).

This sequence belongs to the universal ribosomal protein uS13 family. Part of the 30S ribosomal subunit. Forms a loose heterodimer with protein S19. Forms two bridges to the 50S subunit in the 70S ribosome.

In terms of biological role, located at the top of the head of the 30S subunit, it contacts several helices of the 16S rRNA. In the 70S ribosome it contacts the 23S rRNA (bridge B1a) and protein L5 of the 50S subunit (bridge B1b), connecting the 2 subunits; these bridges are implicated in subunit movement. Contacts the tRNAs in the A and P-sites. This is Small ribosomal subunit protein uS13 from Polynucleobacter asymbioticus (strain DSM 18221 / CIP 109841 / QLW-P1DMWA-1) (Polynucleobacter necessarius subsp. asymbioticus).